Consider the following 288-residue polypeptide: Store-operated calcium entry regulator STIMATE (288 aa).

The Cytoplasmic segment spans residues M1 to E28. The next 3 membrane-spanning stretches (helical) occupy residues S29–F49, I69–V89, and L102–V122. Residues G149 to G153 carry the GXXXG motif motif. 2 consecutive transmembrane segments (helical) span residues A156–L176 and L194–D214. Topologically, residues N215–V288 are cytoplasmic. The disordered stretch occupies residues E228 to V288. A required for localization in the endoplasmic reticulum region spans residues K241–R246. The segment covering A261–E272 has biased composition (acidic residues). Positions P277–V288 are enriched in basic residues.

It belongs to the STIMATE family. In terms of assembly, homooligomer. Interacts with STIM1.

It is found in the endoplasmic reticulum membrane. Its function is as follows. Acts as a regulator of store-operated Ca(2+) entry (SOCE) at junctional sites that connect the endoplasmic reticulum (ER) and plasma membrane (PM), called ER-plasma membrane (ER-PM) junction or cortical ER. SOCE is a Ca(2+) influx following depletion of intracellular Ca(2+) stores. Acts by interacting with STIM1, promoting STIM1 conformational switch. Involved in STIM1 relocalization to ER-PM junctions. Contributes to the maintenance and reorganization of store-dependent ER-PM junctions. This is Store-operated calcium entry regulator STIMATE from Rattus norvegicus (Rat).